The primary structure comprises 327 residues: Pyruvate dehydrogenase E1 component subunit beta (327 aa).

Position 63 (Glu-63) interacts with thiamine diphosphate.

In terms of assembly, heterodimer of an alpha and a beta chain. Requires thiamine diphosphate as cofactor.

The enzyme catalyses N(6)-[(R)-lipoyl]-L-lysyl-[protein] + pyruvate + H(+) = N(6)-[(R)-S(8)-acetyldihydrolipoyl]-L-lysyl-[protein] + CO2. In terms of biological role, the pyruvate dehydrogenase complex catalyzes the overall conversion of pyruvate to acetyl-CoA and CO(2). It contains multiple copies of three enzymatic components: pyruvate dehydrogenase (E1), dihydrolipoamide acetyltransferase (E2) and lipoamide dehydrogenase (E3). The chain is Pyruvate dehydrogenase E1 component subunit beta (pdhB) from Mycoplasma pneumoniae (strain ATCC 29342 / M129 / Subtype 1) (Mycoplasmoides pneumoniae).